The chain runs to 65 residues: U2-theraphotoxin-Pc1a (65 aa).

An N-terminal signal peptide occupies residues 1–20; it reads MGFKLVLFIAVLTLVGSSNA. Positions 21 to 36 are excised as a propeptide; that stretch reads EISAKMDSRDSPMIQE. 3 cysteine pairs are disulfide-bonded: cysteine 39–cysteine 56, cysteine 46–cysteine 59, and cysteine 55–cysteine 64.

Belongs to the neurotoxin 36 family. 02 subfamily. As to expression, expressed by the venom gland.

The protein localises to the secreted. Its function is as follows. Possesses strong antiplasmodial activity against the intra-erythrocyte stage of P.falciparum in vitro. IC(50) for inhibiting P.falciparum growth is 1.15 uM. Specifically interacts with infected erythrocytes. Does not lyse erythrocytes, is not cytotoxic to nucleated mammalian cells, and does not inhibit neuromuscular function. Has neither antibacterial nor antifungal activity. This chain is U2-theraphotoxin-Pc1a, found in Psalmopoeus cambridgei (Trinidad chevron tarantula).